We begin with the raw amino-acid sequence, 465 residues long: Antithrombin-III (465 aa).

Positions 1-32 (MYSPGAGSGAAGERKLCLLSLLLIGALGCAIC) are cleaved as a signal peptide. 2 disulfides stabilise this stretch: Cys41–Cys161 and Cys54–Cys128. Thr64 bears the Phosphothreonine mark. At Ser69 the chain carries Phosphoserine. Trp82 contacts heparin. Residue Asn129 is glycosylated (N-linked (GlcNAc...) asparagine). Heparin is bound at residue Arg162. N-linked (GlcNAc...) asparagine glycosylation occurs at Asn168. Residue Arg178 participates in heparin binding. Residues Asn188 and Asn225 are each glycosylated (N-linked (GlcNAc...) asparagine). Residues Cys280 and Cys463 are joined by a disulfide bond.

The protein belongs to the serpin family. Forms protease inhibiting heterodimer with TMPRSS7. Post-translationally, phosphorylated by FAM20C in the extracellular medium. Plasma.

The protein resides in the secreted. It localises to the extracellular space. Its function is as follows. Most important serine protease inhibitor in plasma that regulates the blood coagulation cascade. AT-III inhibits thrombin, matriptase-3/TMPRSS7, as well as factors IXa, Xa and XIa. Its inhibitory activity is greatly enhanced in the presence of heparin. This chain is Antithrombin-III (Serpinc1), found in Mus musculus (Mouse).